Here is a 387-residue protein sequence, read N- to C-terminus: Pepsin A-5 (387 aa).

Residues Met1–Cys15 form the signal peptide. The propeptide at Leu16–Thr62 is activation peptide. The region spanning Tyr74–Ala384 is the Peptidase A1 domain. Asp92 is a catalytic residue. Cystine bridges form between Cys105-Cys110 and Cys266-Cys270. Asp275 is a catalytic residue. Cysteines 309 and 343 form a disulfide.

The protein belongs to the peptidase A1 family. Expressed in glandular chief cells of the neonatal stomach. Expressed in yolk sacs of the placenta (at protein level).

The protein localises to the secreted. The catalysed reaction is Preferential cleavage: hydrophobic, preferably aromatic, residues in P1 and P1' positions. Cleaves 1-Phe-|-Val-2, 4-Gln-|-His-5, 13-Glu-|-Ala-14, 14-Ala-|-Leu-15, 15-Leu-|-Tyr-16, 16-Tyr-|-Leu-17, 23-Gly-|-Phe-24, 24-Phe-|-Phe-25 and 25-Phe-|-Tyr-26 bonds in the B chain of insulin.. Its activity is regulated as follows. Inhibited by pepstatin A. Shows particularly broad specificity; although bonds involving phenylalanine and leucine are preferred, many others are also cleaved to some extent. May play a role as a specialized neonatal digestive enzyme. The sequence is that of Pepsin A-5 from Mus musculus (Mouse).